Consider the following 191-residue polypeptide: Threonylcarbamoyl-AMP synthase (191 aa).

Residues 7-191 form the YrdC-like domain; it reads QSELNDALKI…FHASTGKRLR (185 aa).

The protein belongs to the SUA5 family. TsaC subfamily.

The protein resides in the cytoplasm. The catalysed reaction is L-threonine + hydrogencarbonate + ATP = L-threonylcarbamoyladenylate + diphosphate + H2O. In terms of biological role, required for the formation of a threonylcarbamoyl group on adenosine at position 37 (t(6)A37) in tRNAs that read codons beginning with adenine. Catalyzes the conversion of L-threonine, HCO(3)(-)/CO(2) and ATP to give threonylcarbamoyl-AMP (TC-AMP) as the acyladenylate intermediate, with the release of diphosphate. This chain is Threonylcarbamoyl-AMP synthase, found in Psychromonas ingrahamii (strain DSM 17664 / CCUG 51855 / 37).